Reading from the N-terminus, the 270-residue chain is MFLVNSFLKGGGGGGGGGGLGGGLGNVLGGLISGAAGGGGGGGGGGGMGLGGGGGGGGTAMRILGGVISAISEAAAQYNPEPPPPRSHYSNIEANESEEERQFRKLFVQLAGDDMEVSATELMNILNKVVTRHPDLKTDGFGIDTCRSMVAVMDSDTTGKLGFEEFKYLWNNIKKWQGIYKRFDTDRSGTIGSNELPGAFEAAGFHLNQHIYSMIIRRYSDETGNMDFDNFISCLVRLDAMFRAFRSLDKNGTGQIQVNIQEWLQLTMYS.

Position 1 is an N-acetylmethionine (methionine 1). Residue serine 6 is modified to Phosphoserine. One can recognise an EF-hand 1; atypical domain in the interval 98–132 (EEERQFRKLFVQLAGDDMEVSATELMNILNKVVTR). Positions 111, 114, 116, 121, 139, 154, 156, 158, 160, and 165 each coordinate Ca(2+). EF-hand domains follow at residues 141 to 174 (FGID…NNIK), 171 to 206 (NNIK…AGFH), 207 to 235 (LNQH…ISCL), and 236 to 270 (VRLD…TMYS). N6-acetyllysine is present on lysine 181. Ca(2+) contacts are provided by aspartate 184, aspartate 186, serine 188, threonine 190, glutamate 195, and aspartate 227.

In terms of assembly, homodimer or heterodimer of a large (catalytic) and a small (regulatory) subunit. In presence of calcium, the heterodimer dissociates.

It is found in the cytoplasm. The protein localises to the cell membrane. In terms of biological role, regulatory subunit of the calcium-regulated non-lysosomal thiol-protease which catalyzes limited proteolysis of substrates involved in cytoskeletal remodeling and signal transduction. Essential for embryonic development. The polypeptide is Calpain small subunit 1 (Capns1) (Rattus norvegicus (Rat)).